The chain runs to 297 residues: Light-independent protochlorophyllide reductase iron-sulfur ATP-binding protein (297 aa).

ATP contacts are provided by residues 41 to 46 and Lys70; that span reads GIGKST. Mg(2+) is bound at residue Ser45. 2 residues coordinate [4Fe-4S] cluster: Cys126 and Cys160. ATP-binding positions include 211-212 and 235-237; these read NR and PDL.

This sequence belongs to the NifH/BchL/ChlL family. Homodimer. Protochlorophyllide reductase is composed of three subunits; BchL, BchN and BchB. Requires [4Fe-4S] cluster as cofactor.

It carries out the reaction chlorophyllide a + oxidized 2[4Fe-4S]-[ferredoxin] + 2 ADP + 2 phosphate = protochlorophyllide a + reduced 2[4Fe-4S]-[ferredoxin] + 2 ATP + 2 H2O. It functions in the pathway porphyrin-containing compound metabolism; bacteriochlorophyll biosynthesis (light-independent). Functionally, component of the dark-operative protochlorophyllide reductase (DPOR) that uses Mg-ATP and reduced ferredoxin to reduce ring D of protochlorophyllide (Pchlide) to form chlorophyllide a (Chlide). This reaction is light-independent. The L component serves as a unique electron donor to the NB-component of the complex, and binds Mg-ATP. The protein is Light-independent protochlorophyllide reductase iron-sulfur ATP-binding protein of Methylobacterium radiotolerans (strain ATCC 27329 / DSM 1819 / JCM 2831 / NBRC 15690 / NCIMB 10815 / 0-1).